The chain runs to 193 residues: Guanylate kinase (193 aa).

The 181-residue stretch at 8–188 folds into the Guanylate kinase-like domain; that stretch reads GRLVVLVGPS…ACEQLVSLFV (181 aa). 15–22 is a binding site for ATP; sequence GPSAVGKS.

This sequence belongs to the guanylate kinase family.

The protein localises to the cytoplasm. The enzyme catalyses GMP + ATP = GDP + ADP. Its function is as follows. Essential for recycling GMP and indirectly, cGMP. In Nocardia farcinica (strain IFM 10152), this protein is Guanylate kinase.